We begin with the raw amino-acid sequence, 110 residues long: Prothymosin alpha (110 aa).

Residue M1 is modified to N-acetylmethionine. A disordered region spans residues 1 to 110 (MSDAAVDTSS…TKKQKTDEDD (110 aa)). Position 2 is an N-acetylserine; in Prothymosin alpha, N-terminally processed (S2). S2 is modified (phosphoserine). T8 is subject to Phosphothreonine. Phosphoserine is present on residues S9 and S10. 2 positions are modified to phosphothreonine: T13 and T14. Residues 13 to 31 (TTKDLKEKKEVVEEAENGR) are compositionally biased toward basic and acidic residues. K15 is subject to N6-acetyllysine; alternate. K15 carries the N6-succinyllysine; alternate modification. Residues 42 to 83 (ENGEQEADNEVDEEEEEGGEEEEEEEEGDGEEEDGDEDEEAE) show a composition bias toward acidic residues. The segment covering 100–110 (DTKKQKTDEDD) has biased composition (basic and acidic residues). T101 is modified (phosphothreonine). K102 carries the post-translational modification N6-acetyllysine; alternate. K102 participates in a covalent cross-link: Glycyl lysine isopeptide (Lys-Gly) (interchain with G-Cter in SUMO2); alternate. T106 bears the Phosphothreonine mark.

The protein belongs to the pro/parathymosin family. As to quaternary structure, interacts with NUPR1; regulates apoptotic process. Post-translationally, covalently linked to a small RNA of about 20 nucleotides.

The protein resides in the nucleus. In terms of biological role, prothymosin alpha may mediate immune function by conferring resistance to certain opportunistic infections. The chain is Prothymosin alpha (PTMA) from Pongo abelii (Sumatran orangutan).